Here is a 347-residue protein sequence, read N- to C-terminus: MTRPRLAQGLAFFLLGGTGLWVLWKFIKDWLLVSYIPYYLPCPEFFNMKLPFRKEKPLQPVTQLQYPQPKLLEHGPTELLTLTPWLAPIVSEGTFDPELLKSMYQPLNLTIGVTVFAVGKYTCFIQRFLESAEEFFMRGYQVHYYLFTHDPTAVPRVPLGPGRLLSIIPIQGYSRWEEISMRRMETINKHIAKRAHKEVDYLFCVDVDMVFRNPWGPETLGDLVAAIHPGYFAVPRRKFPYERRQVSSAFVADNEGDFYYGGALFGGRVARVYEFTRACHMAILADKANSIMAAWQEESHLNRHFIWHKPSKVLSPEYLWDERKPRPRSLKMIRFSSVKKNANWLRT.

The Cytoplasmic segment spans residues 1-6 (MTRPRL). The chain crosses the membrane as a helical; Signal-anchor for type II membrane protein span at residues 7 to 27 (AQGLAFFLLGGTGLWVLWKFI). Over 28–347 (KDWLLVSYIP…VKKNANWLRT (320 aa)) the chain is Lumenal. N-linked (GlcNAc...) asparagine glycosylation is present at Asn108. Residues 116-121 (FAVGKY), 206-208 (DVD), and 228-231 (HPGY) contribute to the substrate site. Residues Asp206 and Asp208 each contribute to the Mn(2+) site. The active-site Nucleophile is Glu298.

It belongs to the glycosyltransferase 6 family. Mn(2+) is required as a cofactor.

Its subcellular location is the golgi apparatus membrane. It catalyses the reaction a globoside Gb4Cer (d18:1(4E)) + UDP-N-acetyl-alpha-D-galactosamine = a globoside Forssman (d18:1(4E)) + UDP + H(+). It carries out the reaction a globoside Gb4Cer + UDP-N-acetyl-alpha-D-galactosamine = a globoside IV3GalNAc-Gb4Cer + UDP + H(+). It functions in the pathway protein modification; protein glycosylation. In terms of biological role, catalyzes the formation of Forssman glycolipid via the addition of N-acetylgalactosamine (GalNAc) in alpha-1,3-linkage to GalNAcb-1,3Gala-1,4Galb-1,4GlcCer (Gb4Cer). Forssman glycolipid (also called Forssman antigen; FG) probably serves for adherence of some pathogens. Conversely, it diminishes Shiga toxins susceptibility. In Mus musculus (Mouse), this protein is Globoside alpha-1,3-N-acetylgalactosaminyltransferase 1.